The primary structure comprises 373 residues: Flagellar P-ring protein 1 (373 aa).

An N-terminal signal peptide occupies residues 1–25 (MKPINTFFSSFLLALTLGLPATSQA).

This sequence belongs to the FlgI family. In terms of assembly, the basal body constitutes a major portion of the flagellar organelle and consists of four rings (L,P,S, and M) mounted on a central rod.

The protein localises to the periplasm. The protein resides in the bacterial flagellum basal body. In terms of biological role, assembles around the rod to form the L-ring and probably protects the motor/basal body from shearing forces during rotation. This chain is Flagellar P-ring protein 1, found in Vibrio parahaemolyticus serotype O3:K6 (strain RIMD 2210633).